We begin with the raw amino-acid sequence, 355 residues long: Blue-sensitive opsin P467 (355 aa).

Residues 1 to 36 (MNGTEGINFYVPLSNKTGLVRSPFEYPQYYLADPWK) are Extracellular-facing. Residues Asn2 and Asn15 are each glycosylated (N-linked (GlcNAc...) asparagine). A helical transmembrane segment spans residues 37–61 (FKVLSFYMFFLIAAGMPLNGLTLFV). Residues 62–73 (TFQHKKLRQPLN) are Cytoplasmic-facing. Residues 74-98 (YILVNLAAANLVTVCCGFTVTFYAS) traverse the membrane as a helical segment. Residues 99–113 (WYAYFVFGPIGCAIE) lie on the Extracellular side of the membrane. A disulfide bridge connects residues Cys110 and Cys187. Residues 114-133 (GFFATIGGQVALWSLVVLAI) form a helical membrane-spanning segment. Topologically, residues 134–152 (ERYIVICKPMGNFRFSATH) are cytoplasmic. The helical transmembrane segment at 153–176 (AIMGIAFTWFMALACAGPPLFGWS) threads the bilayer. The Extracellular portion of the chain corresponds to 177-202 (RFIPEGMQCSCGPDYYTLNPDFHNES). Asn200 carries an N-linked (GlcNAc...) asparagine glycan. The chain crosses the membrane as a helical span at residues 203 to 230 (YVIYMFIVHFTVPMVVIFFSYGRLVCKV). Residues 231–252 (REAAAQQQESATTQKAEKEVTR) are Cytoplasmic-facing. The helical transmembrane segment at 253-276 (MVILMVLGFLLAWTPYAATAIWIF) threads the bilayer. The Extracellular portion of the chain corresponds to 277–284 (TNRGAAFS). A helical transmembrane segment spans residues 285–309 (VTFMTIPAFFSKSSSIYNPIIYVLL). Lys296 bears the N6-(retinylidene)lysine mark. The Cytoplasmic segment spans residues 310 to 355 (NKQFRNCMVTTICCGKNPFGDEDVSSSVSQSKTEVSSVSSSQVAPA). The tract at residues 333–355 (VSSSVSQSKTEVSSVSSSQVAPA) is disordered. Low complexity predominate over residues 334–355 (SSSVSQSKTEVSSVSSSQVAPA).

Belongs to the G-protein coupled receptor 1 family. Opsin subfamily. Post-translationally, phosphorylated on some or all of the serine and threonine residues present in the C-terminal region. As to expression, in this lizard the color pigments are found in the rod-shaped photoreceptor cells which have been derived from ancestral cone-like photoreceptors.

Its subcellular location is the membrane. Visual pigments are the light-absorbing molecules that mediate vision. They consist of an apoprotein, opsin, covalently linked to cis-retinal. The polypeptide is Blue-sensitive opsin P467 (Gekko gecko (Tokay gecko)).